The sequence spans 323 residues: NADH-ubiquinone oxidoreductase chain 1 (323 aa).

8 helical membrane passes run 4 to 24, 73 to 93, 106 to 126, 150 to 170, 175 to 195, 226 to 246, 256 to 276, and 303 to 323; these read LFTV…VAFL, YLFF…WNLM, LLLV…SGWA, LALI…TYIM, FSWF…STLA, LFFI…VVIF, LFPL…FLFL, and IGAL…LPLF.

It belongs to the complex I subunit 1 family.

It is found in the mitochondrion inner membrane. The catalysed reaction is a ubiquinone + NADH + 5 H(+)(in) = a ubiquinol + NAD(+) + 4 H(+)(out). In terms of biological role, core subunit of the mitochondrial membrane respiratory chain NADH dehydrogenase (Complex I) that is believed to belong to the minimal assembly required for catalysis. Complex I functions in the transfer of electrons from NADH to the respiratory chain. The immediate electron acceptor for the enzyme is believed to be ubiquinone. The protein is NADH-ubiquinone oxidoreductase chain 1 (ND1) of Paracentrotus lividus (Common sea urchin).